Here is a 404-residue protein sequence, read N- to C-terminus: MDFTSDYAHRRMVKFLTIILIGFMTVFGLLANRYRAGRRERFRFSKANLAFASLWAIAFSLVYGRQIYKEYQEGQINLKDATTLYSYMNITVAVINYVSQMIISDHVAKVLSKVPFFDTLKEFRLDSRSLYISIVLALVKTVAFPLTIEVAFILQQRRQHPEMSLIWTLYRLFPLIISNFLNNCYFGAMVVVKEILYALNRRLEAQLQEVNLLQRKDQLKLYTKYYRMQRFCALADELDQLAYRYRLIYVHSGKYLTPMSLSMILSLICHLLGITVGFYSLYYAIADTLIMGKPYDGLGSLINLVFLSISLAEITLLTHLCNHLLVATRRSAVILQEMNLQHADSRYRQAVHGFTLLVTVTKYQIKPLGLYELDMRLISNVFSAVASFLLILVQADLSQRFKMQ.

The Cytoplasmic portion of the chain corresponds to 1–11 (MDFTSDYAHRR). The helical transmembrane segment at 12–32 (MVKFLTIILIGFMTVFGLLAN) threads the bilayer. At 33-43 (RYRAGRRERFR) the chain is on the extracellular side. A helical transmembrane segment spans residues 44-64 (FSKANLAFASLWAIAFSLVYG). Residues 65 to 133 (RQIYKEYQEG…RLDSRSLYIS (69 aa)) are Cytoplasmic-facing. The chain crosses the membrane as a helical span at residues 134–154 (IVLALVKTVAFPLTIEVAFIL). The Extracellular portion of the chain corresponds to 155-171 (QQRRQHPEMSLIWTLYR). The helical transmembrane segment at 172–192 (LFPLIISNFLNNCYFGAMVVV) threads the bilayer. The Cytoplasmic segment spans residues 193-260 (KEILYALNRR…HSGKYLTPMS (68 aa)). The chain crosses the membrane as a helical span at residues 261–281 (LSMILSLICHLLGITVGFYSL). At 282–296 (YYAIADTLIMGKPYD) the chain is on the extracellular side. Residues 297–317 (GLGSLINLVFLSISLAEITLL) form a helical membrane-spanning segment. Topologically, residues 318–376 (THLCNHLLVATRRSAVILQEMNLQHADSRYRQAVHGFTLLVTVTKYQIKPLGLYELDMR) are cytoplasmic. A helical membrane pass occupies residues 377 to 397 (LISNVFSAVASFLLILVQADL). Residues 398–404 (SQRFKMQ) are Extracellular-facing.

The protein belongs to the insect chemoreceptor superfamily. Gustatory receptor (GR) family. Gr22e subfamily. As to expression, in larvae, is expressed in neurons of the terminal external chemosensory organ.

It is found in the cell membrane. In terms of biological role, probable gustatory receptor which mediates acceptance or avoidance behavior, depending on its substrates. In Drosophila melanogaster (Fruit fly), this protein is Putative gustatory receptor 94a (Gr94a).